Consider the following 176-residue polypeptide: MKNKYHLTTDELQLFKESIAGAKKLKQDTIVHRSPPKLGKKIAPERLLQEQVDASYYFSDEFQPQLDTEGPTRYVRPGVDHFEVKKLRRGDYSPDMFLDLHGLTQKQAKQELGALIAACKREHVHCACVMHGHGKHVLKQQTPLWLAQHPDVLAFHQAPKEWGGTAALLVLVELEQ.

Positions 98–173 constitute a Smr domain; that stretch reads LDLHGLTQKQ…GTAALLVLVE (76 aa).

This sequence belongs to the SmrB family. In terms of assembly, associates with collided ribosomes, but not with correctly translating polysomes.

Its function is as follows. Acts as a ribosome collision sensor. Detects stalled/collided disomes (pairs of ribosomes where the leading ribosome is stalled and a second ribosome has collided with it) and endonucleolytically cleaves mRNA at the 5' boundary of the stalled ribosome. Stalled/collided disomes form a new interface (primarily via the 30S subunits) that binds SmrB. Cleaved mRNA becomes available for tmRNA ligation, leading to ribosomal subunit dissociation and rescue of stalled ribosomes. The polypeptide is Ribosome rescue factor SmrB (Yersinia enterocolitica serotype O:8 / biotype 1B (strain NCTC 13174 / 8081)).